Here is a 159-residue protein sequence, read N- to C-terminus: MIIKIISVGKLKQTGFVNLVNDYLKRINYYLKCQEIVVNDEPEPTQISTKLLEQIKDKEANRILKNINQNDFVIALIIEGKIISSEMLAENLQNWLNASYPNICFVIGGSNGLHEKIYERANYHLSLSKMTFAHGLAKVMVCEQIYRALSILNNGKYHK.

S-adenosyl-L-methionine is bound by residues leucine 76, glycine 108, and 127–132; that span reads LSKMTF.

This sequence belongs to the RNA methyltransferase RlmH family. In terms of assembly, homodimer.

It localises to the cytoplasm. It catalyses the reaction pseudouridine(1915) in 23S rRNA + S-adenosyl-L-methionine = N(3)-methylpseudouridine(1915) in 23S rRNA + S-adenosyl-L-homocysteine + H(+). Its function is as follows. Specifically methylates the pseudouridine at position 1915 (m3Psi1915) in 23S rRNA. The chain is Ribosomal RNA large subunit methyltransferase H from Ureaplasma urealyticum serovar 10 (strain ATCC 33699 / Western).